The sequence spans 342 residues: Dihydroorotate dehydrogenase (quinone) (342 aa).

Residues 61 to 65 (AGLDK) and Thr-85 contribute to the FMN site. Substrate is bound at residue Lys-65. Residue 110-114 (NRMGF) coordinates substrate. Residues Asn-138 and Asn-171 each coordinate FMN. Asn-171 is a substrate binding site. Ser-174 functions as the Nucleophile in the catalytic mechanism. Asn-176 contributes to the substrate binding site. Residues Lys-216 and Thr-244 each contribute to the FMN site. Residue 245 to 246 (NT) participates in substrate binding. FMN-binding positions include Gly-267, Gly-296, and 317–318 (YS).

It belongs to the dihydroorotate dehydrogenase family. Type 2 subfamily. As to quaternary structure, monomer. It depends on FMN as a cofactor.

Its subcellular location is the cell membrane. The catalysed reaction is (S)-dihydroorotate + a quinone = orotate + a quinol. Its pathway is pyrimidine metabolism; UMP biosynthesis via de novo pathway; orotate from (S)-dihydroorotate (quinone route): step 1/1. In terms of biological role, catalyzes the conversion of dihydroorotate to orotate with quinone as electron acceptor. In Pseudomonas paraeruginosa (strain DSM 24068 / PA7) (Pseudomonas aeruginosa (strain PA7)), this protein is Dihydroorotate dehydrogenase (quinone).